The sequence spans 392 residues: Formate-dependent phosphoribosylglycinamide formyltransferase (392 aa).

N(1)-(5-phospho-beta-D-ribosyl)glycinamide contacts are provided by residues 22–23 (EL) and Glu-82. ATP is bound by residues Arg-114, Lys-155, 160-165 (SSGKGQ), 195-198 (EGVV), and Glu-203. The ATP-grasp domain occupies 119 to 308 (RLAAEELGLP…EFALHVRAFL (190 aa)). The Mg(2+) site is built by Glu-267 and Glu-279. N(1)-(5-phospho-beta-D-ribosyl)glycinamide contacts are provided by residues Asp-286, Lys-355, and 362 to 363 (RR).

Belongs to the PurK/PurT family. In terms of assembly, homodimer.

The catalysed reaction is N(1)-(5-phospho-beta-D-ribosyl)glycinamide + formate + ATP = N(2)-formyl-N(1)-(5-phospho-beta-D-ribosyl)glycinamide + ADP + phosphate + H(+). It participates in purine metabolism; IMP biosynthesis via de novo pathway; N(2)-formyl-N(1)-(5-phospho-D-ribosyl)glycinamide from N(1)-(5-phospho-D-ribosyl)glycinamide (formate route): step 1/1. Involved in the de novo purine biosynthesis. Catalyzes the transfer of formate to 5-phospho-ribosyl-glycinamide (GAR), producing 5-phospho-ribosyl-N-formylglycinamide (FGAR). Formate is provided by PurU via hydrolysis of 10-formyl-tetrahydrofolate. The sequence is that of Formate-dependent phosphoribosylglycinamide formyltransferase from Salmonella paratyphi B (strain ATCC BAA-1250 / SPB7).